A 137-amino-acid polypeptide reads, in one-letter code: MERTFVMIKPDGVRRGLVGEILARFERKGFRIAALKLMRISQELAERHYAEHREKPFFPGLVRFITSGPVVAMVLEGPGVVAEVRKMMGATHPKDALPGTIRGDFATTIDENVIHGSATLEDAQREIALFFRPEELL.

Residues Lys9, Phe57, Arg85, Thr91, Arg102, and Asn112 each coordinate ATP. His115 functions as the Pros-phosphohistidine intermediate in the catalytic mechanism.

Belongs to the NDK family. In terms of assembly, homotetramer. The cofactor is Mg(2+).

The protein localises to the cytoplasm. It catalyses the reaction a 2'-deoxyribonucleoside 5'-diphosphate + ATP = a 2'-deoxyribonucleoside 5'-triphosphate + ADP. It carries out the reaction a ribonucleoside 5'-diphosphate + ATP = a ribonucleoside 5'-triphosphate + ADP. Major role in the synthesis of nucleoside triphosphates other than ATP. The ATP gamma phosphate is transferred to the NDP beta phosphate via a ping-pong mechanism, using a phosphorylated active-site intermediate. This chain is Nucleoside diphosphate kinase, found in Thermus thermophilus (strain ATCC BAA-163 / DSM 7039 / HB27).